A 74-amino-acid polypeptide reads, in one-letter code: Probable tetrachloroethene reductive dehalogenase membrane anchor protein (74 aa).

The next 2 helical transmembrane spans lie at 11 to 31 (ALGL…ISMG) and 40 to 60 (AGSI…FLLM).

It belongs to the PceB family.

The protein localises to the cell inner membrane. In terms of biological role, may act as a membrane anchor for the tetrachloroethene reductive dehalogenase PceA. In Sulfurospirillum multivorans (Dehalospirillum multivorans), this protein is Probable tetrachloroethene reductive dehalogenase membrane anchor protein.